A 91-amino-acid chain; its full sequence is Small ribosomal subunit protein uS15 (91 aa).

It belongs to the universal ribosomal protein uS15 family. Part of the 30S ribosomal subunit. Forms a bridge to the 50S subunit in the 70S ribosome, contacting the 23S rRNA.

In terms of biological role, one of the primary rRNA binding proteins, it binds directly to 16S rRNA where it helps nucleate assembly of the platform of the 30S subunit by binding and bridging several RNA helices of the 16S rRNA. Forms an intersubunit bridge (bridge B4) with the 23S rRNA of the 50S subunit in the ribosome. In Hydrogenobaculum sp. (strain Y04AAS1), this protein is Small ribosomal subunit protein uS15.